A 531-amino-acid chain; its full sequence is Tryptophan biosynthesis protein TRP1 (531 aa).

The indole-3-glycerol phosphate synthase stretch occupies residues 1 to 254 (MGNILEEIAA…TVKDLLQNVT (254 aa)). Residues 255–531 (RHSESGEFAL…TLKIDEETEN (277 aa)) are N-(5'-phosphoribosyl)anthranilate isomerase.

The protein in the N-terminal section; belongs to the TrpC family. It in the C-terminal section; belongs to the TrpF family.

It carries out the reaction N-(5-phospho-beta-D-ribosyl)anthranilate = 1-(2-carboxyphenylamino)-1-deoxy-D-ribulose 5-phosphate. The catalysed reaction is 1-(2-carboxyphenylamino)-1-deoxy-D-ribulose 5-phosphate + H(+) = (1S,2R)-1-C-(indol-3-yl)glycerol 3-phosphate + CO2 + H2O. It functions in the pathway amino-acid biosynthesis; L-tryptophan biosynthesis; L-tryptophan from chorismate: step 3/5. It participates in amino-acid biosynthesis; L-tryptophan biosynthesis; L-tryptophan from chorismate: step 4/5. Bifunctional enzyme that catalyzes two sequential steps of tryptophan biosynthetic pathway. The polypeptide is Tryptophan biosynthesis protein TRP1 (TRP1) (Phytophthora nicotianae (Potato buckeye rot agent)).